Here is a 153-residue protein sequence, read N- to C-terminus: Bud site selection protein 25 (153 aa).

Its function is as follows. Involved in bud site selection. Required for resistance to the DNA-damaging agent methyl methanesulfonate (MMS). The protein is Bud site selection protein 25 of Saccharomyces cerevisiae (strain ATCC 204508 / S288c) (Baker's yeast).